We begin with the raw amino-acid sequence, 365 residues long: Peptide chain release factor 2 (365 aa).

Residue Gln252 is modified to N5-methylglutamine.

This sequence belongs to the prokaryotic/mitochondrial release factor family. In terms of processing, methylated by PrmC. Methylation increases the termination efficiency of RF2.

It localises to the cytoplasm. In terms of biological role, peptide chain release factor 2 directs the termination of translation in response to the peptide chain termination codons UGA and UAA. This chain is Peptide chain release factor 2, found in Pasteurella multocida (strain Pm70).